We begin with the raw amino-acid sequence, 164 residues long: Cyclic pyranopterin monophosphate synthase (164 aa).

Substrate contacts are provided by residues 77 to 79 (LCH) and 115 to 116 (ME). Aspartate 130 is a catalytic residue.

This sequence belongs to the MoaC family. As to quaternary structure, homohexamer; trimer of dimers.

It carries out the reaction (8S)-3',8-cyclo-7,8-dihydroguanosine 5'-triphosphate = cyclic pyranopterin phosphate + diphosphate. The protein operates within cofactor biosynthesis; molybdopterin biosynthesis. In terms of biological role, catalyzes the conversion of (8S)-3',8-cyclo-7,8-dihydroguanosine 5'-triphosphate to cyclic pyranopterin monophosphate (cPMP). This Sinorhizobium medicae (strain WSM419) (Ensifer medicae) protein is Cyclic pyranopterin monophosphate synthase.